We begin with the raw amino-acid sequence, 152 residues long: MGDSIKVLSENRQARFQYEILETYECGLVLLGTEVKSIRAGKVNLRDGFARIRNGEAWLMNVHISPHESTNPSYNHDPLRDRKLLLHKQEIRKLVGKVEQKGLTLVPLKLYLKNGRVKVSLGLARGKKLHDKRQDLKQRQDKREMERAMKQR.

Positions 130–152 (HDKRQDLKQRQDKREMERAMKQR) are disordered. The span at 132–152 (KRQDLKQRQDKREMERAMKQR) shows a compositional bias: basic and acidic residues.

It belongs to the SmpB family.

It is found in the cytoplasm. Required for rescue of stalled ribosomes mediated by trans-translation. Binds to transfer-messenger RNA (tmRNA), required for stable association of tmRNA with ribosomes. tmRNA and SmpB together mimic tRNA shape, replacing the anticodon stem-loop with SmpB. tmRNA is encoded by the ssrA gene; the 2 termini fold to resemble tRNA(Ala) and it encodes a 'tag peptide', a short internal open reading frame. During trans-translation Ala-aminoacylated tmRNA acts like a tRNA, entering the A-site of stalled ribosomes, displacing the stalled mRNA. The ribosome then switches to translate the ORF on the tmRNA; the nascent peptide is terminated with the 'tag peptide' encoded by the tmRNA and targeted for degradation. The ribosome is freed to recommence translation, which seems to be the essential function of trans-translation. This Thermosynechococcus vestitus (strain NIES-2133 / IAM M-273 / BP-1) protein is SsrA-binding protein.